Reading from the N-terminus, the 82-residue chain is Small ribosomal subunit protein uS17 (82 aa).

This sequence belongs to the universal ribosomal protein uS17 family. In terms of assembly, part of the 30S ribosomal subunit.

In terms of biological role, one of the primary rRNA binding proteins, it binds specifically to the 5'-end of 16S ribosomal RNA. This Rhodopseudomonas palustris (strain BisA53) protein is Small ribosomal subunit protein uS17.